We begin with the raw amino-acid sequence, 252 residues long: Chitooligosaccharide deacetylase (252 aa).

Mg(2+) is bound by residues H61 and H125.

Belongs to the YdjC deacetylase family. ChbG subfamily. As to quaternary structure, homodimer. Requires Mg(2+) as cofactor.

It is found in the cytoplasm. The catalysed reaction is N,N'-diacetylchitobiose + H2O = N-acetyl-beta-D-glucosaminyl-(1-&gt;4)-D-glucosamine + acetate. It carries out the reaction diacetylchitobiose-6'-phosphate + H2O = N'-monoacetylchitobiose-6'-phosphate + acetate. It functions in the pathway glycan degradation; chitin degradation. Its function is as follows. Involved in the degradation of chitin. ChbG is essential for growth on the acetylated chitooligosaccharides chitobiose and chitotriose but is dispensable for growth on cellobiose and chitosan dimer, the deacetylated form of chitobiose. Deacetylation of chitobiose-6-P and chitotriose-6-P is necessary for both the activation of the chb promoter by the regulatory protein ChbR and the hydrolysis of phosphorylated beta-glucosides by the phospho-beta-glucosidase ChbF. Catalyzes the removal of only one acetyl group from chitobiose-6-P to yield monoacetylchitobiose-6-P, the inducer of ChbR and the substrate of ChbF. The chain is Chitooligosaccharide deacetylase from Salmonella paratyphi C (strain RKS4594).